The primary structure comprises 236 residues: Leucyl/phenylalanyl-tRNA--protein transferase (236 aa).

Belongs to the L/F-transferase family.

It is found in the cytoplasm. It catalyses the reaction N-terminal L-lysyl-[protein] + L-leucyl-tRNA(Leu) = N-terminal L-leucyl-L-lysyl-[protein] + tRNA(Leu) + H(+). It carries out the reaction N-terminal L-arginyl-[protein] + L-leucyl-tRNA(Leu) = N-terminal L-leucyl-L-arginyl-[protein] + tRNA(Leu) + H(+). The enzyme catalyses L-phenylalanyl-tRNA(Phe) + an N-terminal L-alpha-aminoacyl-[protein] = an N-terminal L-phenylalanyl-L-alpha-aminoacyl-[protein] + tRNA(Phe). Functions in the N-end rule pathway of protein degradation where it conjugates Leu, Phe and, less efficiently, Met from aminoacyl-tRNAs to the N-termini of proteins containing an N-terminal arginine or lysine. The chain is Leucyl/phenylalanyl-tRNA--protein transferase from Shewanella putrefaciens (strain CN-32 / ATCC BAA-453).